Here is a 751-residue protein sequence, read N- to C-terminus: MAVPAALIPPTQLVPPQPPISTSASSSGTTTSTSSATSSPAPSIGPPASSGPTLFRPEPIASSASSSAAATVTSPGGGGGGSGGGGGSGGNGGGGGSNCNPSLAAGSSGGGVSAGGGGASSTPITASTGSSSSSSSSSSSSSSSSSSSSSSSSSSSCGPLPGKPVYSTPSPVENTPQNNECKMVDLRGAKVASFTVEGCELICLPQAFDLFLKHLVGGLHTVYTKLKRLEITPVVCNVEQVRILRGLGAIQPGVNRCKLISRKDFETLYNDCTNASSRPGRPPKRTQSVTSPENSHIMPHSVPGLMSPGIIPPTGLTAAAAAAAAATNAAIAEAMKVKKIKLEAMSNYHASNNQHGADSENGDMNSSVGSSGGSWDKETLHSPPSQGSQAPVAHARMPAAFSLPVSHPLNHLQHSHLPPNGLELPFMMMPHPLIPVSLPPASVTMAMSQMNHLSTIANMAAAAQVQSPPSRVETSVIKERVPDSPSPAPSLEEGRRPGSHPSSHRSSSVSSSPARTESSSDRIPVHQNGLSMNQMLMGLSPNVLPGPKEGDLAGHDMGHESKRIHIEKDETPLSTPTARDSIDKLSLTGHGQPLPPGFPSPFLFPDGLSSIETLLTNIQGLLKVAIDNARAQEKQVQLEKTELKMDFLRERELRETLEKQLAMEQKNRAIVQKRLKKEKKAKRKLQEALEFETKRREQAEQTLKQAASADSLRVLNDSLTPEIEADRSGGRADAERTIQDGRLYLKTTVMY.

The interval 1–178 is disordered; it reads MAVPAALIPP…PSPVENTPQN (178 aa). Low complexity-rich tracts occupy residues 20–53 and 61–74; these read ISTSASSSGTTTSTSSATSSPAPSIGPPASSGPT and ASSASSSAAATVTS. Composition is skewed to gly residues over residues 75–97 and 107–119; these read PGGGGGGSGGGGGSGGNGGGGGS and SSGGGVSAGGGGA. The span at 120–156 shows a compositional bias: low complexity; sequence SSTPITASTGSSSSSSSSSSSSSSSSSSSSSSSSSSS. The segment covering 167-178 has biased composition (polar residues); sequence STPSPVENTPQN. Residues 182-268 form a DACHbox-N region; sequence KMVDLRGAKV…LISRKDFETL (87 aa). Residues 182–377 are interaction with SIX6 and HDAC3; the sequence is KMVDLRGAKV…VGSSGGSWDK (196 aa). Disordered stretches follow at residues 273 to 295, 351 to 393, 467 to 525, and 537 to 556; these read TNASSRPGRPPKRTQSVTSPENS, SNNQ…APVA, SPPS…RIPV, and MGLSPNVLPGPKEGDLAGHD. 2 stretches are compositionally biased toward polar residues: residues 285-294 and 351-369; these read RTQSVTSPEN and SNNQHGADSENGDMNSSVG. Residue S484 is modified to Phosphoserine. Residues 499 to 517 are compositionally biased toward low complexity; the sequence is SHPSSHRSSSVSSSPARTE. The interval 609-689 is DACHbox-C; sequence SSIETLLTNI…KAKRKLQEAL (81 aa). Residues 620 to 699 form an interaction with SIN3A region; the sequence is GLLKVAIDNA…EFETKRREQA (80 aa). Positions 623–711 form a coiled coil; it reads KVAIDNARAQ…TLKQAASADS (89 aa).

This sequence belongs to the DACH/dachshund family. In terms of assembly, interacts with SIX1, SIX6 and EYA3. Interacts with NCOR1 and HDAC3 through its N-terminus. Interacts with SIN3A through its C-terminus. Interacts with SMAD3 and SMAD4. Expressed at higher levels in adult kidney and lung, and at lower levels in brain and testis. Expressed in embryonal kidneys, eyes, cochleae and limb buds.

It localises to the nucleus. Functionally, transcription factor that is involved in regulation of organogenesis. Seems to be a regulator of SIX1, SIX6 and probably SIX5. Corepression of precursor cell proliferation in myoblasts by SIX1 is switched to coactivation through recruitment of EYA3 to the SIX1-DACH1 complex. Transcriptional activation also seems to involve association of CREBBP. Seems to act as a corepressor of SIX6 in regulating proliferation by directly repressing cyclin-dependent kinase inhibitors, including the p27Kip1 promoter. Inhibits TGF-beta signaling through interaction with SMAD4 and NCOR1. Binds to chromatin DNA via its DACHbox-N domain. The polypeptide is Dachshund homolog 1 (Dach1) (Mus musculus (Mouse)).